We begin with the raw amino-acid sequence, 214 residues long: tRNA (guanine-N(7)-)-methyltransferase (214 aa).

S-adenosyl-L-methionine-binding residues include glutamate 43, glutamate 68, aspartate 95, and aspartate 117. Aspartate 117 is an active-site residue. Residues lysine 121, aspartate 153, and threonine 190–glutamate 193 each bind substrate.

This sequence belongs to the class I-like SAM-binding methyltransferase superfamily. TrmB family.

The catalysed reaction is guanosine(46) in tRNA + S-adenosyl-L-methionine = N(7)-methylguanosine(46) in tRNA + S-adenosyl-L-homocysteine. The protein operates within tRNA modification; N(7)-methylguanine-tRNA biosynthesis. Catalyzes the formation of N(7)-methylguanine at position 46 (m7G46) in tRNA. The sequence is that of tRNA (guanine-N(7)-)-methyltransferase from Staphylococcus aureus (strain COL).